A 186-amino-acid chain; its full sequence is Large ribosomal subunit protein eL15 (186 aa).

A disordered region spans residues 163-186 (RGLTSAGKKGRGLNKKGKGAEKVR). A compositionally biased stretch (basic residues) spans 170 to 179 (KKGRGLNKKG).

This sequence belongs to the eukaryotic ribosomal protein eL15 family.

The chain is Large ribosomal subunit protein eL15 from Methanosphaera stadtmanae (strain ATCC 43021 / DSM 3091 / JCM 11832 / MCB-3).